We begin with the raw amino-acid sequence, 125 residues long: Protein ApaG (125 aa).

Residues methionine 1 to asparagine 125 form the ApaG domain.

The protein is Protein ApaG of Proteus mirabilis (strain HI4320).